Consider the following 192-residue polypeptide: MSEQTQQQNSEEAVENVEAVETVETVGNADGVQEQAAAEPAYEDLQARIAELEAQLKDEQLRALANEQNLRRRHQQEIADTHKFAGQKFAVEMLPVKDYLEMALLDQSGNFDALKMGVQMTLNELQKAFDATQIKEINPKAGDKLDPNIHQAMQAVASEQEPNTVVGVMKKGYTLSDRVLRPAMVTVARKEA.

Belongs to the GrpE family. In terms of assembly, homodimer.

It is found in the cytoplasm. Its function is as follows. Participates actively in the response to hyperosmotic and heat shock by preventing the aggregation of stress-denatured proteins, in association with DnaK and GrpE. It is the nucleotide exchange factor for DnaK and may function as a thermosensor. Unfolded proteins bind initially to DnaJ; upon interaction with the DnaJ-bound protein, DnaK hydrolyzes its bound ATP, resulting in the formation of a stable complex. GrpE releases ADP from DnaK; ATP binding to DnaK triggers the release of the substrate protein, thus completing the reaction cycle. Several rounds of ATP-dependent interactions between DnaJ, DnaK and GrpE are required for fully efficient folding. In Neisseria gonorrhoeae (strain ATCC 700825 / FA 1090), this protein is Protein GrpE.